Reading from the N-terminus, the 223-residue chain is uncharacterized protein (223 aa).

The tract at residues Gly40 to Lys70 is disordered. The segment covering Thr51–Lys70 has biased composition (basic and acidic residues).

This is an uncharacterized protein from Homo sapiens (Human).